A 254-amino-acid chain; its full sequence is 5'-nucleotidase SurE (254 aa).

Positions 8, 9, 38, and 91 each coordinate a divalent metal cation.

Belongs to the SurE nucleotidase family. A divalent metal cation serves as cofactor.

The protein localises to the cytoplasm. The enzyme catalyses a ribonucleoside 5'-phosphate + H2O = a ribonucleoside + phosphate. In terms of biological role, nucleotidase that shows phosphatase activity on nucleoside 5'-monophosphates. In Anaeromyxobacter dehalogenans (strain 2CP-1 / ATCC BAA-258), this protein is 5'-nucleotidase SurE.